Reading from the N-terminus, the 255-residue chain is Ribonuclease HII (255 aa).

The RNase H type-2 domain occupies 72–255 (AIICGIDEVG…KSFEPIKSLL (184 aa)). 3 residues coordinate a divalent metal cation: Asp78, Glu79, and Asp170.

The protein belongs to the RNase HII family. Mn(2+) is required as a cofactor. It depends on Mg(2+) as a cofactor.

It localises to the cytoplasm. It carries out the reaction Endonucleolytic cleavage to 5'-phosphomonoester.. Functionally, endonuclease that specifically degrades the RNA of RNA-DNA hybrids. The sequence is that of Ribonuclease HII from Staphylococcus aureus (strain bovine RF122 / ET3-1).